Consider the following 387-residue polypeptide: tRNA N6-adenosine threonylcarbamoyltransferase (387 aa).

The Fe cation site is built by H112 and H116. Residues 134–138, D167, G180, and N325 contribute to the substrate site; that span reads LASGG. Position 353 (D353) interacts with Fe cation.

Belongs to the KAE1 / TsaD family. Fe(2+) serves as cofactor.

The protein resides in the cytoplasm. It catalyses the reaction L-threonylcarbamoyladenylate + adenosine(37) in tRNA = N(6)-L-threonylcarbamoyladenosine(37) in tRNA + AMP + H(+). Functionally, required for the formation of a threonylcarbamoyl group on adenosine at position 37 (t(6)A37) in tRNAs that read codons beginning with adenine. Is involved in the transfer of the threonylcarbamoyl moiety of threonylcarbamoyl-AMP (TC-AMP) to the N6 group of A37, together with TsaE and TsaB. TsaD likely plays a direct catalytic role in this reaction. The polypeptide is tRNA N6-adenosine threonylcarbamoyltransferase (Rickettsia prowazekii (strain Madrid E)).